An 801-amino-acid polypeptide reads, in one-letter code: Potassium transporter 1 (801 aa).

Positions 1-20 (MSSALEVEGSGSPGVEPAAT) are disordered. Over 1–57 (MSSALEVEGSGSPGVEPAATATASRLKRHDSLFGDAEKVSGGKHHGGSAVSWAVTLH) the chain is Cytoplasmic. Residues 58–80 (LAFQSVGIIYGDIGTSPLYVYSS) traverse the membrane as a helical segment. The Extracellular portion of the chain corresponds to 81–94 (TFPDGIGHRDDLVG). Residues 95–115 (VLSLILYTLIIIPMLKYVFIV) form a helical membrane-spanning segment. Over 116–181 (LYANDNGDGG…HKLESSRAAK (66 aa)) the chain is Cytoplasmic. The chain crosses the membrane as a helical span at residues 182–202 (MALFFLTILGTSMVMGDGTLT). The Extracellular portion of the chain corresponds to 203–219 (PAISVLSAVSGIREKAP). Residues 220-240 (NLTQTQVVLISVAILFMLFSV) traverse the membrane as a helical segment. Residues 241 to 247 (QRFGTDK) lie on the Cytoplasmic side of the membrane. Residues 248–268 (VGYTFAPIISVWFLLIAGIGL) form a helical membrane-spanning segment. Topologically, residues 269–298 (YNLVVHEITILKAFNPWYIVQYFRRNGKKG) are extracellular. The chain crosses the membrane as a helical span at residues 299–319 (WVSLGGVVLCVTGTEGMFADL). At 320–328 (GHFNIRAVQ) the chain is on the cytoplasmic side. Residues 329–349 (ISFNCILFPSVALCYIGQAAY) form a helical membrane-spanning segment. Topologically, residues 350–375 (LRKFPENVSDTFYKSIPGKYRDRLNF) are extracellular. Residues 376–398 (GPLFWPTFIVAILAAIIASQAML) form a helical membrane-spanning segment. Residues 399-429 (SGAFAILSKALSLGCLPRVRVIHTSKKYEGQ) are Cytoplasmic-facing. Residues 430–450 (VYIPEVNFMMGLASIIVTIAF) form a helical membrane-spanning segment. Residues 451–461 (RTTTSIGNAYG) are Extracellular-facing. The chain crosses the membrane as a helical span at residues 462-482 (ICVVTTFMVTTHLMTVVMLLI). The Cytoplasmic segment spans residues 483-487 (WKKHL). The helical transmembrane segment at 488-508 (VFILLFYCVFGFTEVVYLSSI) threads the bilayer. At 509 to 511 (LSK) the chain is on the extracellular side. A helical membrane pass occupies residues 512 to 532 (FVDGGYLPFCFAMVLMTMMAT). Residues 533 to 801 (WHYVHVRRYW…LLKVGITYEI (269 aa)) lie on the Cytoplasmic side of the membrane. The segment at 679 to 728 (DDDDEAAARPRRSTSSAVHSEEAIQAASSGRTTASSVQLQAGGEPPAAMD) is disordered. A compositionally biased stretch (polar residues) spans 704–717 (AASSGRTTASSVQL).

The protein belongs to the HAK/KUP transporter (TC 2.A.72.3) family. Expressed almost exclusively in roots.

It localises to the cell membrane. In terms of biological role, high-affinity potassium transporter. Also transports rubidium, with the same affinity and cesium, with a lower affinity. In Oryza sativa subsp. japonica (Rice), this protein is Potassium transporter 1 (HAK1).